Reading from the N-terminus, the 618-residue chain is DNA mismatch repair protein MutL (618 aa).

The span at 366-381 (AEPTAAREPATPRYSG) shows a compositional bias: low complexity. Residues 366 to 405 (AEPTAAREPATPRYSGGTSGGNGGRQSAGGWPHAQPGYQK) are disordered. Over residues 382–392 (GTSGGNGGRQS) the composition is skewed to gly residues.

Belongs to the DNA mismatch repair MutL/HexB family.

Its function is as follows. This protein is involved in the repair of mismatches in DNA. It is required for dam-dependent methyl-directed DNA mismatch repair. May act as a 'molecular matchmaker', a protein that promotes the formation of a stable complex between two or more DNA-binding proteins in an ATP-dependent manner without itself being part of a final effector complex. This is DNA mismatch repair protein MutL from Salmonella agona (strain SL483).